The sequence spans 86 residues: MSKGHSLQDPYLNTLRKEKVPVSIYLVNGIKLQGSIESFDQFVVLLKNTVSQMVYKHAISTVVPARPVRLPSPSDSEHGDSEPGNA.

The region spanning 9-68 (DPYLNTLRKEKVPVSIYLVNGIKLQGSIESFDQFVVLLKNTVSQMVYKHAISTVVPARPV) is the Sm domain. A disordered region spans residues 66 to 86 (RPVRLPSPSDSEHGDSEPGNA). The segment covering 75–86 (DSEHGDSEPGNA) has biased composition (basic and acidic residues).

The protein belongs to the Hfq family. In terms of assembly, homohexamer.

In terms of biological role, RNA chaperone that binds small regulatory RNA (sRNAs) and mRNAs to facilitate mRNA translational regulation in response to envelope stress, environmental stress and changes in metabolite concentrations. Also binds with high specificity to tRNAs. The sequence is that of RNA-binding protein Hfq from Pseudomonas putida (strain W619).